The primary structure comprises 35 residues: N-acylglucosamine 2-epimerase (35 aa).

The segment at 1-21 (LNLVDQLGEADEELAGTYAEL) is leucine-zipper.

Belongs to the N-acylglucosamine 2-epimerase family. As to quaternary structure, homodimer. Forms a heterodimer with renin and inhibits its activity.

It carries out the reaction an N-acyl-D-glucosamine = an N-acyl-D-mannosamine. It functions in the pathway amino-sugar metabolism; N-acetylneuraminate degradation. Its function is as follows. Catalyzes the interconversion of N-acetylglucosamine to N-acetylmannosamine. Involved in the N-glycolylneuraminic acid (Neu5Gc) degradation pathway. The sequence is that of N-acylglucosamine 2-epimerase from Canis lupus familiaris (Dog).